The primary structure comprises 282 residues: Putative 4-diphosphocytidyl-2-C-methyl-D-erythritol kinase (282 aa).

The active site involves Lys9. Residue 93–103 (PVSAGLAGGST) participates in ATP binding. Residue Asp135 is part of the active site.

The protein belongs to the GHMP kinase family. IspE subfamily.

The catalysed reaction is 4-CDP-2-C-methyl-D-erythritol + ATP = 4-CDP-2-C-methyl-D-erythritol 2-phosphate + ADP + H(+). Its function is as follows. Catalyzes the phosphorylation of the position 2 hydroxy group of 4-diphosphocytidyl-2C-methyl-D-erythritol. The protein is Putative 4-diphosphocytidyl-2-C-methyl-D-erythritol kinase of Staphylococcus saprophyticus subsp. saprophyticus (strain ATCC 15305 / DSM 20229 / NCIMB 8711 / NCTC 7292 / S-41).